We begin with the raw amino-acid sequence, 947 residues long: Bifunctional glutamine synthetase adenylyltransferase/adenylyl-removing enzyme (947 aa).

The adenylyl removase stretch occupies residues 1–440; that stretch reads MTPLSSPLSQ…VFNELIGDDE (440 aa). An adenylyl transferase region spans residues 450–947; the sequence is SEPWRDVWQD…ASWRKWLVAV (498 aa).

The protein belongs to the GlnE family. Requires Mg(2+) as cofactor.

The catalysed reaction is [glutamine synthetase]-O(4)-(5'-adenylyl)-L-tyrosine + phosphate = [glutamine synthetase]-L-tyrosine + ADP. The enzyme catalyses [glutamine synthetase]-L-tyrosine + ATP = [glutamine synthetase]-O(4)-(5'-adenylyl)-L-tyrosine + diphosphate. Its function is as follows. Involved in the regulation of glutamine synthetase GlnA, a key enzyme in the process to assimilate ammonia. When cellular nitrogen levels are high, the C-terminal adenylyl transferase (AT) inactivates GlnA by covalent transfer of an adenylyl group from ATP to specific tyrosine residue of GlnA, thus reducing its activity. Conversely, when nitrogen levels are low, the N-terminal adenylyl removase (AR) activates GlnA by removing the adenylyl group by phosphorolysis, increasing its activity. The regulatory region of GlnE binds the signal transduction protein PII (GlnB) which indicates the nitrogen status of the cell. The protein is Bifunctional glutamine synthetase adenylyltransferase/adenylyl-removing enzyme of Salmonella dublin (strain CT_02021853).